The chain runs to 941 residues: Isoleucine--tRNA ligase (941 aa).

The short motif at 58 to 68 (PYANGNIHIGH) is the 'HIGH' region element. E564 lines the L-isoleucyl-5'-AMP pocket. The 'KMSKS' region signature appears at 605 to 609 (KMSKS). ATP is bound at residue K608. Zn(2+) is bound by residues C904, C907, C924, and C927.

It belongs to the class-I aminoacyl-tRNA synthetase family. IleS type 1 subfamily. In terms of assembly, monomer. Requires Zn(2+) as cofactor.

The protein resides in the cytoplasm. The catalysed reaction is tRNA(Ile) + L-isoleucine + ATP = L-isoleucyl-tRNA(Ile) + AMP + diphosphate. Functionally, catalyzes the attachment of isoleucine to tRNA(Ile). As IleRS can inadvertently accommodate and process structurally similar amino acids such as valine, to avoid such errors it has two additional distinct tRNA(Ile)-dependent editing activities. One activity is designated as 'pretransfer' editing and involves the hydrolysis of activated Val-AMP. The other activity is designated 'posttransfer' editing and involves deacylation of mischarged Val-tRNA(Ile). The chain is Isoleucine--tRNA ligase from Buchnera aphidicola subsp. Cinara cedri (strain Cc).